Here is a 312-residue protein sequence, read N- to C-terminus: Phospholipid phosphatase 3 (312 aa).

Over 1-33 (MQSYKYDKAIVPESKNGGSPALNNNPRKGGSKR) the chain is Cytoplasmic. Ser19 bears the Phosphoserine mark. Residues 34–54 (VLLICLDLFCLFMAALPFLII) form a helical membrane-spanning segment. Residues 55 to 85 (ETSTIKPYRRGFYCNDESIKYPLKVSETIND) lie on the Extracellular side of the membrane. The chain crosses the membrane as a helical span at residues 86-106 (AVLCAVGIVIAILAIITGEFY). At 107-123 (RIYYLKEKSRSTTQNPY) the chain is on the cytoplasmic side. The Dityrosine basolateral targeting motif signature appears at 109–110 (YY). A helical transmembrane segment spans residues 124–144 (VAALYKQVGCFLFGCAISQSF). The Extracellular portion of the chain corresponds to 145–194 (TDIAKVSIGRLRPHFLSVCDPDFSQINCSEGYIQNYRCRGEDSKVQEARK). Positions 149–157 (KVSIGRLRP) are phosphatase sequence motif I. Asn171 is a glycosylation site (N-linked (GlcNAc...) asparagine). The Integrin-binding motif signature appears at 183 to 185 (RGE). Residues 195–215 (SFFSGHASFSMFTMLYLVLYL) form a helical membrane-spanning segment. A phosphatase sequence motif II region spans residues 197–200 (FSGH). His200 acts as the Proton donors in catalysis. The Cytoplasmic portion of the chain corresponds to 216–226 (QARFTWRGARL). The helical transmembrane segment at 227-244 (LRPLLQFTLLMMAFYTGL) threads the bilayer. Positions 245-256 (SRVSDYKHHPSD) are phosphatase sequence motif III. Residues 245-258 (SRVSDYKHHPSDVL) lie on the Extracellular side of the membrane. His252 serves as the catalytic Nucleophile. A helical membrane pass occupies residues 259–279 (AGFAQGALVACCIVFFVSDLF). The mediates interaction with CTNND1 stretch occupies residues 276 to 312 (SDLFKTKTSLSLPAPAIRREILSPVDIIDRNNHHNMV). Residues 280 to 312 (KTKTSLSLPAPAIRREILSPVDIIDRNNHHNMV) lie on the Cytoplasmic side of the membrane.

It belongs to the PA-phosphatase related phosphoesterase family. In terms of assembly, forms functional homodimers and homooligomers that are not required for substrate recognition and catalytic activity. Can also form heterooligomers with other PLPP2 and PLPP3. Interacts with CTNND1; negatively regulates the PLPP3-mediated stabilization of beta-catenin/CTNNB1. N-glycosylated. Contains high-mannose oligosaccharides. In terms of tissue distribution, detected in lung, cerebellum and heart atrium.

Its subcellular location is the cell membrane. It localises to the basolateral cell membrane. The protein resides in the endoplasmic reticulum membrane. The protein localises to the endoplasmic reticulum-Golgi intermediate compartment membrane. It is found in the golgi apparatus membrane. Its subcellular location is the golgi apparatus. It localises to the trans-Golgi network membrane. The protein resides in the membrane raft. The enzyme catalyses a 1,2-diacyl-sn-glycero-3-phosphate + H2O = a 1,2-diacyl-sn-glycerol + phosphate. It catalyses the reaction 1,2-dihexadecanoyl-sn-glycero-3-phosphate + H2O = 1,2-dihexadecanoyl-sn-glycerol + phosphate. It carries out the reaction 1,2-di-(9Z-octadecenoyl)-sn-glycero-3-phosphate + H2O = 1,2-di-(9Z-octadecenoyl)-sn-glycerol + phosphate. The catalysed reaction is a monoacyl-sn-glycero-3-phosphate + H2O = a monoacylglycerol + phosphate. The enzyme catalyses (9Z)-octadecenoyl-sn-glycero-3-phosphate + H2O = (9Z-octadecenoyl)-glycerol + phosphate. It catalyses the reaction sphing-4-enine 1-phosphate + H2O = sphing-4-enine + phosphate. It carries out the reaction an N-acylsphing-4-enine 1-phosphate + H2O = an N-acylsphing-4-enine + phosphate. The catalysed reaction is N-(octanoyl)-sphing-4-enine-1-phosphate + H2O = N-octanoylsphing-4-enine + phosphate. The enzyme catalyses N-(9Z-octadecenoyl)-ethanolamine phosphate + H2O = N-(9Z-octadecenoyl) ethanolamine + phosphate. The protein operates within lipid metabolism; phospholipid metabolism. With respect to regulation, magnesium-independent phospholipid phosphatase. Insensitive to N-ethylmaleimide. In terms of biological role, magnesium-independent phospholipid phosphatase of the plasma membrane that catalyzes the dephosphorylation of a variety of glycerolipid and sphingolipid phosphate esters including phosphatidate/PA, lysophosphatidate/LPA, diacylglycerol pyrophosphate/DGPP, sphingosine 1-phosphate/S1P and ceramide 1-phosphate/C1P. Also acts on N-oleoyl ethanolamine phosphate/N-(9Z-octadecenoyl)-ethanolamine phosphate, a potential physiological compound. Has both an extracellular and an intracellular phosphatase activity, allowing the hydrolysis and the cellular uptake of these bioactive lipid mediators from the milieu, regulating signal transduction in different cellular processes. Through the dephosphorylation of extracellular sphingosine-1-phosphate and the regulation of its extra- and intracellular availability, plays a role in vascular homeostasis, regulating endothelial cell migration, adhesion, survival, proliferation and the production of pro-inflammatory cytokines. By maintaining the appropriate levels of this lipid in the cerebellum, also ensure its proper development and function. Through its intracellular lipid phosphatase activity may act in early compartments of the secretory pathway, regulating the formation of Golgi to endoplasmic reticulum retrograde transport carriers. Functionally, independently of this phosphatase activity may also function in the Wnt signaling pathway and the stabilization of beta-catenin/CTNNB1, thereby regulating cell proliferation, migration and differentiation in angiogenesis or yet in tumor growth. Also plays a role in integrin-mediated cell-cell adhesion in angiogenesis. In Mus musculus (Mouse), this protein is Phospholipid phosphatase 3.